We begin with the raw amino-acid sequence, 392 residues long: MKCCDNIDARMVDETSINLDPIQVGGRLTPEAMKAMISWGDGYSVCDNCRKPFRLDYIEKPPLKDFHVDVAEWLGMAQARTVPGARRGFQQVAGTYVEKGDPVLIGALAHYTSYLSVELQKGIVREIPKTADNHITAEDTANRIEDVVREFGIAPKLLYIDHVDYQFGNMHDVKGIAKVAHQYDIPVLYNGVYTVGIMPVNGKDLGVDFIIGSGHKSMAAPAPSGILAATEERANEVFRTTQMEGDLTGRKFGIKEVGILGCSLMGAPIVGLLASFPTVKARVEHFDEELANSKIVVEALRFIEGTKILSEYPRKHTLTRVDTTGSFDQVAQTHKKRGFFLSSALGKKGITGIIPGATKVWKFNTYGMTKKQAEYVADTYLEIAETNGLTIN.

Residues alanine 85–arginine 86, asparagine 190, and serine 213–histidine 215 contribute to the pyridoxal 5'-phosphate site. Lysine 216 is modified (N6-(pyridoxal phosphate)lysine).

This sequence belongs to the SepCysS family. Homodimer. Interacts with SepRS. It depends on pyridoxal 5'-phosphate as a cofactor.

The enzyme catalyses O-phospho-L-seryl-tRNA(Cys) + hydrogen sulfide + H(+) = L-cysteinyl-tRNA(Cys) + phosphate. In terms of biological role, converts O-phospho-L-seryl-tRNA(Cys) (Sep-tRNA(Cys)) to L-cysteinyl-tRNA(Cys) (Cys-tRNA(Cys)). The chain is O-phospho-L-seryl-tRNA:Cys-tRNA synthase 1 from Methanocorpusculum labreanum (strain ATCC 43576 / DSM 4855 / Z).